The following is a 75-amino-acid chain: Penaeidin-3l (75 aa).

Positions 1 to 19 (MRLVVCLVFLASFALVCQG) are cleaved as a signal peptide. Gln-20 is subject to Pyrrolidone carboxylic acid. Disulfide bonds link Cys-44/Cys-59, Cys-48/Cys-66, and Cys-60/Cys-67. At Ser-74 the chain carries Serine amide.

This sequence belongs to the penaeidin family.

It is found in the cytoplasmic granule. In terms of biological role, antibacterial and antifungal activity. Presents chitin-binding activity. The polypeptide is Penaeidin-3l (Penaeus setiferus (Atlantic white shrimp)).